Consider the following 413-residue polypeptide: tRNA (guanine-N(7)-)-methyltransferase non-catalytic subunit WDR4 (413 aa).

N-acetylalanine is present on alanine 2. WD repeat units lie at residues 61–100 (TGSDSILASTFSKSGRYFALTDDSKRLILFRTKPWQCLSV), 102–141 (MVVRRCTALTFTASEDRVLVADKSGDVYSFSVLEPDGCGR), 145–185 (GHLS…IESF), 188–228 (GHTE…QLQC), and 289–329 (TFPH…WQAA). The segment at 380-413 (RLQQQLKKKRQRSPFPGSPEQTKKACPGQSALSC) is disordered. 2 positions are modified to phosphoserine: serine 392 and serine 412.

This sequence belongs to the WD repeat TRM82 family. In terms of assembly, non-catalytic component of the METTL1-WDR4 complex, composed of METTL1 and WDR4. Interacts with FEN1; the interaction is direct.

The protein resides in the nucleus. The protein localises to the chromosome. It participates in tRNA modification; N(7)-methylguanine-tRNA biosynthesis. Its function is as follows. Non-catalytic component of the METTL1-WDR4 methyltransferase complex required for the formation of N(7)-methylguanine in a subset of RNA species, such as tRNAs, mRNAs and microRNAs (miRNAs). In the METTL1-WDR4 methyltransferase complex, WDR4 acts as a scaffold for tRNA-binding. Required for the formation of N(7)-methylguanine at position 46 (m7G46) in a large subset of tRNAs that contain the 5'-RAGGU-3' motif within the variable loop. M7G46 interacts with C13-G22 in the D-loop to stabilize tRNA tertiary structure and protect tRNAs from decay. Also required for the formation of N(7)-methylguanine at internal sites in a subset of mRNAs. Also required for methylation of a specific subset of miRNAs, such as let-7. Acts as a regulator of embryonic stem cell self-renewal and differentiation. Independently of METTL1, also plays a role in genome stability: localizes at the DNA replication site and regulates endonucleolytic activities of FEN1. The chain is tRNA (guanine-N(7)-)-methyltransferase non-catalytic subunit WDR4 from Mus musculus (Mouse).